Consider the following 333-residue polypeptide: tRNA N6-adenosine threonylcarbamoyltransferase (333 aa).

His108 and His112 together coordinate Fe cation. Residues 129-133 (LVSGG), Asp161, Glu178, and Ser258 contribute to the substrate site. Residue Asp286 coordinates Fe cation.

It belongs to the KAE1 / TsaD family. Fe(2+) is required as a cofactor.

The protein resides in the cytoplasm. The catalysed reaction is L-threonylcarbamoyladenylate + adenosine(37) in tRNA = N(6)-L-threonylcarbamoyladenosine(37) in tRNA + AMP + H(+). Functionally, required for the formation of a threonylcarbamoyl group on adenosine at position 37 (t(6)A37) in tRNAs that read codons beginning with adenine. Is probably involved in the transfer of the threonylcarbamoyl moiety of threonylcarbamoyl-AMP (TC-AMP) to the N6 group of A37. In Pyrobaculum islandicum (strain DSM 4184 / JCM 9189 / GEO3), this protein is tRNA N6-adenosine threonylcarbamoyltransferase.